We begin with the raw amino-acid sequence, 511 residues long: Ribose import ATP-binding protein RbsA 3 (511 aa).

2 ABC transporter domains span residues 21–257 (LEMR…VGRD) and 256–511 (RDVE…TGNA). Residue 53–60 (GENGAGKS) coordinates ATP.

The protein belongs to the ABC transporter superfamily. Ribose importer (TC 3.A.1.2.1) family. The complex is composed of an ATP-binding protein (RbsA), two transmembrane proteins (RbsC) and a solute-binding protein (RbsB).

It is found in the cell inner membrane. It catalyses the reaction D-ribose(out) + ATP + H2O = D-ribose(in) + ADP + phosphate + H(+). Its function is as follows. Part of the ABC transporter complex RbsABC involved in ribose import. Responsible for energy coupling to the transport system. This is Ribose import ATP-binding protein RbsA 3 from Rhizobium etli (strain ATCC 51251 / DSM 11541 / JCM 21823 / NBRC 15573 / CFN 42).